The chain runs to 4095 residues: Protein adenylyltransferase and cysteine protease IbpA (4095 aa).

Positions 1–97 (MNKNCYKLIF…MVAAPNFAQS (97 aa)) are cleaved as a signal peptide. Binds bovine IgG2 Fc regions lie at residues 972 to 1515 (SERI…FVKA) and 1116 to 1255 (SEVQ…FLKE). 5 disordered regions span residues 1082–1117 (EVSD…LPSE), 1130–1154 (KEKA…LQSD), 1204–1223 (QEAL…AKAK), 1625–1652 (TVSH…TGFT), and 1705–1732 (EEDE…QKEE). The span at 1087–1096 (WERDPDEPDE) shows a compositional bias: acidic residues. Composition is skewed to basic and acidic residues over residues 1097 to 1117 (PDYK…LPSE) and 1130 to 1139 (KEKAQQKRQA). Residues 1116 to 1247 (SEVQDKLRQK…AKDHQIEEAL (132 aa)) adopt a coiled-coil conformation. Over residues 1716 to 1727 (KAKAAPDATDNA) the composition is skewed to low complexity. Tandem repeats lie at residues 2250–2271 (YSTL…SDDI), 2272–2295 (YSLL…AEGA), 2296–2317 (YDLL…SDDL), 2318–2343 (YSTV…AAGP), 2344–2365 (YSLL…GEGP), 2366–2387 (YSLL…SNST), 2388–2413 (YSTV…VAGP), 2414–2435 (YSLL…GEGP), 2436–2457 (YSLL…SDSP), 2458–2483 (YSTV…VAGP), 2484–2505 (YSLL…GEGP), and 2506–2527 (YSLL…SDSP). The 12 X 22 AA approximate repeats stretch occupies residues 2250–2527 (YSTLGDQNAN…RTLGGESDSP (278 aa)). 2 stretches are compositionally biased toward polar residues: residues 2592-2611 (SDTE…TRNA) and 2794-2803 (TAPQKTSPVK). Disordered regions lie at residues 2592 to 2617 (SDTE…PLPP), 2765 to 2809 (TIGE…SAEG), 2825 to 2894 (AKGQ…SPKR), 2914 to 2933 (LKSK…EPIY), 2943 to 3033 (LARA…KSED), and 3049 to 3069 (NKSQ…PNYD). Residues 2880-2889 (PFPSEFSSEP) show a composition bias toward low complexity. Polar residues-rich tracts occupy residues 2977–2996 (SNLS…QSVA) and 3005–3018 (AESN…QKLQ). Residues 3052–3062 (QAKEAKSEQET) are compositionally biased toward basic and acidic residues. The Fido 1 domain occupies 3218–3355 (LTVEMIEKLN…AEVVKEFLTE (138 aa)). The tract at residues 3222 to 4095 (MIEKLNHGLR…FNVVNYKKNN (874 aa)) is yopT-like. The binds bovine IgG2 Fc stretch occupies residues 3354 to 3698 (TELGKKSSPQ…VDFINRAKNE (345 aa)). 2 disordered regions span residues 3357–3415 (GKKS…PSVP) and 3432–3454 (AELK…ATGV). Composition is skewed to polar residues over residues 3360 to 3379 (SSPQ…SPVT) and 3388 to 3401 (VENT…TIKQ). The segment covering 3443–3454 (KAAEKSEGATGV) has biased composition (basic and acidic residues). The tract at residues 3535-3557 (IPEATVKQMSHLPEFDDILTEGA) is arm region. The region spanning 3640-3777 (LTVQMIENLN…SEVVVEFLKE (138 aa)) is the Fido 2 domain. ATP contacts are provided by residues 3670–3671 (KE), 3722–3724 (GNG), Arg3728, and Gln3757. Residues 3783–3798 (SKEDNEQNLEKTDRTS) are compositionally biased toward basic and acidic residues. The interval 3783-3829 (SKEDNEQNLEKTDRTSTDLTESAVENSAALSSGTVRSATVSETVTET) is disordered. Polar residues predominate over residues 3799 to 3815 (TDLTESAVENSAALSSG). A compositionally biased stretch (low complexity) spans 3816–3829 (TVRSATVSETVTET). Catalysis depends on for cysteine protease activity residues Cys3910, His4033, and Asp4048.

This sequence in the central section; belongs to the fic family. It in the C-terminal section; belongs to the peptidase C58 family. In terms of assembly, immunoglobulin-binding protein. The long form of the protein is probably processed, and/or the transcript may be subject to differential translational initiation.

It is found in the secreted. Its subcellular location is the cell outer membrane. It catalyses the reaction L-tyrosyl-[protein] + ATP = O-(5'-adenylyl)-L-tyrosyl-[protein] + diphosphate. It carries out the reaction L-threonyl-[protein] + ATP = 3-O-(5'-adenylyl)-L-threonyl-[protein] + diphosphate. Its function is as follows. Adenylyltransferase involved in virulence by mediating the addition of adenosine 5'-monophosphate (AMP) to specific tyrosine residue of host Rho GTPases RhoA, Rac and Cdc42. The resulting AMPylation inactivates Rho GTPases, thereby inhibiting actin assembly in infected cells. Probably also acts as a cysteine protease, which may play a central role after invasion of host cell and in virulence. Possible member (with IbpB) of a 2 partner secretion. Probably able to bind bovine epithelial cells (host cells). May participate in the formation of fibrils at the surface of the bacteria. The sequence is that of Protein adenylyltransferase and cysteine protease IbpA (ibpA) from Histophilus somni (strain 2336) (Haemophilus somnus).